Reading from the N-terminus, the 220-residue chain is ATP synthase subunit 5, mitochondrial (220 aa).

This sequence belongs to the ATPase delta chain family. As to quaternary structure, F-type ATPases have 2 components, CF(1) - the catalytic core - and CF(0) - the membrane proton channel. CF(1) has five subunits: alpha(3), beta(3), gamma(1), delta(1), epsilon(1). CF(0) has three main subunits: a, b and c.

Its subcellular location is the mitochondrion. The protein resides in the mitochondrion inner membrane. Functionally, mitochondrial membrane ATP synthase (F(1)F(0) ATP synthase or Complex V) produces ATP from ADP in the presence of a proton gradient across the membrane which is generated by electron transport complexes of the respiratory chain. F-type ATPases consist of two structural domains, F(1) - containing the extramembraneous catalytic core and F(0) - containing the membrane proton channel, linked together by a central stalk and a peripheral stalk. During catalysis, ATP synthesis in the catalytic domain of F(1) is coupled via a rotary mechanism of the central stalk subunits to proton translocation. Part of the complex F(0) domain and the peripheric stalk, which acts as a stator to hold the catalytic alpha(3)beta(3) subcomplex and subunit a/ATP6 static relative to the rotary elements. The chain is ATP synthase subunit 5, mitochondrial (atp-5) from Neurospora crassa (strain ATCC 24698 / 74-OR23-1A / CBS 708.71 / DSM 1257 / FGSC 987).